Consider the following 185-residue polypeptide: Probable chorismate pyruvate-lyase 2 (185 aa).

Substrate-binding residues include R80, L118, and E170.

The protein belongs to the UbiC family.

The protein resides in the cytoplasm. The catalysed reaction is chorismate = 4-hydroxybenzoate + pyruvate. It functions in the pathway cofactor biosynthesis; ubiquinone biosynthesis. In terms of biological role, removes the pyruvyl group from chorismate, with concomitant aromatization of the ring, to provide 4-hydroxybenzoate (4HB) for the ubiquinone pathway. The protein is Probable chorismate pyruvate-lyase 2 of Pseudomonas entomophila (strain L48).